The sequence spans 551 residues: Solute carrier family 22 member 4 (551 aa).

Residues 1-20 (MRDYDEAIAFLGEWGPFQRL) are Cytoplasmic-facing. The chain crosses the membrane as a helical span at residues 21–41 (IFFLLSASIIPNGFNGMSVVF). The Extracellular segment spans residues 42–141 (LAGTPEHRCR…WNLVCEDNWK (100 aa)). N-linked (GlcNAc...) asparagine glycosylation is found at asparagine 57, asparagine 64, and asparagine 91. A helical membrane pass occupies residues 142 to 162 (VPLTTSLFFVGVLLGSFVSGQ). The Cytoplasmic segment spans residues 163–171 (LSDRFGRKN). A helical membrane pass occupies residues 172–192 (VLFATMAVQTGFSFLQIFSIS). Over 193–197 (WEMFT) the chain is Extracellular. A helical membrane pass occupies residues 198–218 (VLFLIVGMGQISNYVVAFILG). ATP is bound at residue 218–225 (GTEILGKS). The Cytoplasmic segment spans residues 219–232 (TEILGKSVRIIFST). The helical transmembrane segment at 233–253 (LGVCTFFAVGYMLLPLFAYFI) threads the bilayer. At 254–257 (RDWR) the chain is on the extracellular side. A helical transmembrane segment spans residues 258–278 (MLLLALTVPGVLCVPLWWFIP). Residues 279-337 (ESPRWLISQRRFREAEDIIQKAAKMNNIAVPAVIFDSVEELNPLKQQKAFILDLFRTWN) are Cytoplasmic-facing. Residues 338-358 (IAIMTIMSLLLWMLTSVGYFA) traverse the membrane as a helical segment. Topologically, residues 359 to 371 (LSLDTPNLHGDAY) are extracellular. The helical transmembrane segment at 372 to 392 (LNCFLSALIEIPAYITAWLLL) threads the bilayer. Over 393–399 (RTLPRRY) the chain is Cytoplasmic. The chain crosses the membrane as a helical span at residues 400 to 420 (IIAAVLFWGGGVLLFIQLVPV). The Extracellular portion of the chain corresponds to 421-426 (DYYFLS). The helical transmembrane segment at 427–447 (IGLVMLGKFGITSAFSMLYVF) threads the bilayer. Residues 448–460 (TAELYPTMVRNMA) are Cytoplasmic-facing. A helical membrane pass occupies residues 461–481 (VGVTSMASRVGSIIAPYFVYL). Residues 482–486 (GAYNR) are Extracellular-facing. A helical membrane pass occupies residues 487–507 (MLPYIVMGSLTVLIGILTLFF). Residues 508–551 (PESLGMTLPETLEQMQKVKWFRSGKKTRDSMETEENPKVLITAF) are Cytoplasmic-facing.

This sequence belongs to the major facilitator (TC 2.A.1) superfamily. Organic cation transporter (TC 2.A.1.19) family. Interacts with PDZK1.

The protein resides in the apical cell membrane. Its subcellular location is the basal cell membrane. It localises to the mitochondrion membrane. It catalyses the reaction ergothioneine(out) + Na(+)(out) = ergothioneine(in) + Na(+)(in). The catalysed reaction is acetylcholine(in) = acetylcholine(out). The enzyme catalyses (R)-carnitine(out) + Na(+)(out) = (R)-carnitine(in) + Na(+)(in). It carries out the reaction glycine betaine(out) + Na(+)(out) = glycine betaine(in) + Na(+)(in). With respect to regulation, allosterically activated by intracellular ATP. In terms of biological role, transporter that mediates the transport of endogenous and microbial zwitterions and organic cations. Functions as a Na(+)-dependent and pH-dependent high affinity microbial symporter of potent food-derived antioxidant ergothioeine. Transports one sodium ion with one ergothioeine molecule. Involved in the absorption of ergothioneine from the luminal/apical side of the small intestine and renal tubular cells, and into non-parenchymal liver cells, thereby contributing to maintain steady-state ergothioneine level in the body. Also mediates the bidirectional transport of acetycholine, although the exact transport mechanism has not been fully identified yet. Most likely exports anti-inflammatory acetylcholine in non-neuronal tissues, thereby contributing to the non-neuronal cholinergic system. Displays a general physiological role linked to better survival by controlling inflammation and oxidative stress, which may be related to ergothioneine and acetycholine transports. May also function as a low-affinity Na(+)-dependent transporter of L-carnitine through the mitochondrial membrane, thereby maintaining intracellular carnitine homeostasis. May contribute to regulate the transport of cationic compounds in testis across the blood-testis-barrier. This is Solute carrier family 22 member 4 (SLC22A4) from Papio anubis (Olive baboon).